A 417-amino-acid chain; its full sequence is Pre-mRNA-splicing factor PRP46 (417 aa).

7 WD repeats span residues 119–159 (AHQG…LKAT), 162–201 (GHIMGVRSLAVSSRYPYLFSGSEDKTVKCWDLERTNSSSG), 209–248 (GHVGGIYAMALHPELDLLFTGGRDSVIRVWDLRSRTEIMV), 251–290 (GHRSDITSIASQIGDPQIITSSMDATIRLWDIRKATTQLA), 293–334 (HHSK…NEFG), 337–376 (GENKIINTLSINPSNNTLFSGYDDGRMEFYDYVSGDLLQS), and 385–417 (STESAIYASTFDMSGLRLITCEGDKSIKIWGEE).

Belongs to the WD repeat PRL1/PRL2 family. As to quaternary structure, associated with the spliceosome.

Its subcellular location is the cytoplasm. It is found in the nucleus. In terms of biological role, involved in pre-mRNA splicing and required for cell cycle progression at G2/M. The chain is Pre-mRNA-splicing factor PRP46 (PRP46) from Debaryomyces hansenii (strain ATCC 36239 / CBS 767 / BCRC 21394 / JCM 1990 / NBRC 0083 / IGC 2968) (Yeast).